The following is a 79-amino-acid chain: MVKIVIHEERCHGCGNCVIACPVNACNSPNVWGGKGPEDGEDVVIKVVNGTVSVINEDLCEACMTCELACPVDAIEIKT.

2 consecutive 4Fe-4S ferredoxin-type domains span residues 2–31 (VKIV…SPNV) and 51–79 (TVSV…EIKT). [4Fe-4S] cluster-binding residues include Cys-11, Cys-14, Cys-17, Cys-21, Cys-60, Cys-63, Cys-66, and Cys-70.

The cofactor is [4Fe-4S] cluster.

It catalyses the reaction N-formylmethanofuran + 2 oxidized [2Fe-2S]-[ferredoxin] + H2O = methanofuran + 2 reduced [2Fe-2S]-[ferredoxin] + CO2 + H(+). The protein operates within one-carbon metabolism; methanogenesis from CO(2); 5,10-methenyl-5,6,7,8-tetrahydromethanopterin from CO(2): step 1/3. Not inactivated by cyanide. In terms of biological role, catalyzes the reversible oxidation of CO(2) and methanofuran (MFR) to N-formylmethanofuran (CHO-MFR). This enzyme is oxygen-labile. May function as an electron transfer protein. The chain is Tungsten-containing formylmethanofuran dehydrogenase 2 subunit G (fwdG) from Methanopyrus kandleri (strain AV19 / DSM 6324 / JCM 9639 / NBRC 100938).